The sequence spans 733 residues: MTKASVVDQSAPAYAPKRLLAEARAASKVNIEQVFAFLEGSPEKAALTNELLAEFAADPAITQGPEYYDLTKAEQREQTVKKIARLALYLENDIKLARKQHHKDVVRDLQSPDAPMVTMSDMERFEKRSTLVALIDPQLATRLGVNLSLFGNAVRGNGTDEQIKYWLQERGLIFVKGIYGCFAMTELGHGSNVANLQTRATYDPASDSFVIQTPDLVATKWWIGGAAHSATHSTVYARLIVEGKDYGVKVFVVPLRNPKTMELLAGISIGDIGSKMGRDGIDNGWIQFNNVRIPREYMLSRFTKVIPGNPPKVEMEPLLDSISGYAALLSGRVSMVLDSYRFGARFSTIATRYAFGRQQFGDPTNETQLIEYPLHQFRVLPQLAIIYMMAPGAMKLMDTYNSCLGELYGAGDDKKKLTTVSARMKDLFVESASLKATCTWLTSTLIDELRQTCGGHGYSSYNGFGKAYNDWVVQCTWEGDNNVLCLTSGKSLLKKFAGIVRGKKVTICDTSMDYLRMDYIQKVVMGGTKKVSNLSTLPDYYQIWSVILVKYLKRCAETVRDNNDPESVSKLLVSIAKFHAFYSMLQEFHRKLASDQSHVGDAATKEVLWKVYKLSSLYFIDKFSGEFQQLKVMSPDQMTNVQEQMLAILPEIKTHAIRLTDAFHLPDAVINSSIGNYDGDIYHNYFNDVTRVAAKDKAPGVPPYADMLVNFLARGDQFDNLNISETSFKNLGK.

It belongs to the acyl-CoA oxidase family. FAD is required as a cofactor.

It is found in the peroxisome. The catalysed reaction is a 2,3-saturated acyl-CoA + O2 = a (2E)-enoyl-CoA + H2O2. Its pathway is lipid metabolism; peroxisomal fatty acid beta-oxidation. The protein is Acyl-coenzyme A oxidase (POX1) of Eremothecium gossypii (strain ATCC 10895 / CBS 109.51 / FGSC 9923 / NRRL Y-1056) (Yeast).